The chain runs to 390 residues: Na(+)/H(+) antiporter NhaA 2 (390 aa).

Transmembrane regions (helical) follow at residues Ile23 to Ala43, Leu63 to Ile83, Leu100 to Thr120, Gly129 to Gly149, Leu158 to Phe178, Ser181 to Val201, Ala208 to Ile228, Gly265 to Phe285, Leu293 to Val313, Leu331 to Leu351, and Glu362 to Leu382.

Belongs to the NhaA Na(+)/H(+) (TC 2.A.33) antiporter family.

It localises to the cell inner membrane. It carries out the reaction Na(+)(in) + 2 H(+)(out) = Na(+)(out) + 2 H(+)(in). Functionally, na(+)/H(+) antiporter that extrudes sodium in exchange for external protons. The chain is Na(+)/H(+) antiporter NhaA 2 from Novosphingobium aromaticivorans (strain ATCC 700278 / DSM 12444 / CCUG 56034 / CIP 105152 / NBRC 16084 / F199).